A 1328-amino-acid chain; its full sequence is Protein turtle homolog B (1328 aa).

Residues 1-17 (MIWYVATLIASVISTRG) form the signal peptide. The Extracellular portion of the chain corresponds to 18-722 (LVAQGAHGLR…DLTDDGLARP (705 aa)). 5 consecutive Ig-like domains span residues 30 to 115 (PEFV…ECKV), 139 to 226 (PTFT…LLVQ), 228 to 320 (PPFI…AYLT), 324 to 415 (PARV…ARLV), and 420 to 504 (PYFT…THLT). Cystine bridges form between Cys45–Cys113 and Cys161–Cys208. 2 N-linked (GlcNAc...) asparagine glycosylation sites follow: Asn241 and Asn258. Disulfide bonds link Cys250–Cys303, Cys346–Cys397, and Cys442–Cys488. 2 Fibronectin type-III domains span residues 512-604 (APGS…TLAF) and 614-708 (LVTP…STDI). The N-linked (GlcNAc...) asparagine glycan is linked to Asn624. Residues 723-743 (VLAGIVATICFLAAAILFSTL) traverse the membrane as a helical segment. At 744 to 1328 (AACFVNKQRK…EPPTTLPTSG (585 aa)) the chain is on the cytoplasmic side. Disordered stretches follow at residues 758 to 817 (RKKD…EKEL), 914 to 1040 (PMSS…PEPW), and 1106 to 1328 (KSPG…PTSG). Residues Ser775, Ser783, and Ser794 each carry the phosphoserine modification. Residues 990 to 1001 (SPLSSVMSSPPL) are compositionally biased toward low complexity. 3 stretches are compositionally biased toward polar residues: residues 1018 to 1033 (ENAS…TPTG), 1129 to 1141 (LVSQ…TSQG), and 1199 to 1214 (SRLS…SRTG). At Arg1136 the chain carries Omega-N-methylarginine. 2 positions are modified to phosphoserine: Ser1207 and Ser1215. The segment covering 1246–1273 (SFSRKSTPSSTGSPSQSSRSGSPSYRPT) has biased composition (low complexity). Pro residues-rich tracts occupy residues 1284-1295 (PSPPPGPAPPAP) and 1318-1328 (PEPPTTLPTSG).

It belongs to the immunoglobulin superfamily. Turtle family. Found in a complex with MAGI2 and NLGN2, where it interacts with MAGI2 (via PDZ 5 and PDZ 6 domains). In terms of processing, N-glycosylated and sialylated. Not significantly O-glycosylated. Detected in brain.

Its subcellular location is the cell membrane. It localises to the postsynaptic cell membrane. The protein localises to the postsynaptic density. Functionally, transmembrane protein which is abundantly expressed in interneurons, where it may regulate inhibitory synapse development. May mediate homophilic cell adhesion. This is Protein turtle homolog B from Mus musculus (Mouse).